Reading from the N-terminus, the 202-residue chain is N-(5'-phosphoribosyl)anthranilate isomerase (202 aa).

This sequence belongs to the TrpF family.

The enzyme catalyses N-(5-phospho-beta-D-ribosyl)anthranilate = 1-(2-carboxyphenylamino)-1-deoxy-D-ribulose 5-phosphate. Its pathway is amino-acid biosynthesis; L-tryptophan biosynthesis; L-tryptophan from chorismate: step 3/5. This is N-(5'-phosphoribosyl)anthranilate isomerase from Bacillus cereus (strain ATCC 14579 / DSM 31 / CCUG 7414 / JCM 2152 / NBRC 15305 / NCIMB 9373 / NCTC 2599 / NRRL B-3711).